The sequence spans 1479 residues: MIERGKFRSLTLVNWNGFFARTFDLDELVTTLSGGNGAGKSTTMAAFVTALIPDLTLLHFRNTTEAGATSGSRDKGLHGKLRAGVCYSVLDVINSRHQRVVVGVRLQQVAGRDRKVDIKPFAIQGLPTSILPTQLLTETLNDRQARVVSLNELKDKLEAMEGVQFKQFNSITEYHSLMFDLGVVARRLRSASDRSKYYRLIEASLYGGISSTITRSLRDYLLPENSGVRKAFQDMEAALRENRMTLEAIRVTQSDRDLFKHLISEATNYVAADYMRHANERRIHLDKALEYRRDLFTSRSQLAAEQYKHVDMARELQEHNGAEGDLEADYQAASDHLNLVQTALRQQEKIERYEADLDELQIRLEEQNEVVAEAVDRQEENEARAEAAELEVDELKSQLADYQQALDVQQTRAIQYNQALQRWSAKALCHLPDLTPESADEWLETFQAKEQEATEKMLSLEQKMSVANRAHSQFEQAYQLVAAINGPWRANEAWDVAREFVRDGVNQRHQAEQAQGVRSRLNELEQRLREQQDAERQLAEFCKRQGKRYDIDDLETLHQELEARIASLADSVSNAQEQRMALRQELEQLQSRTQTLMRRAPVWLAAQNSLNQLCEQSGEQFASGQEVTEYLQQLLEREREAIVERDEVGRRKRAIDEEIERLSQPGGSEDPRLNALAERFGGVLLSEIYDDVSLDDAPYFSALYGPSRHAIVVPDLSRVAEQLEGLEDCPEDLYLIEGDPQSFDDSVFSVDELEKAVVVKIADIQWRYSRFPALPLFGRAARENRIETLHAERESLSERFGTLSFDVQKTQRLHQAFSRFIEQHLAVTFEDDPEEEIRKLKQARGELERTVSAHESDNQQNRVQYEQAKEGVTALNRILPRLNLLADDTLADRVDEIQERLDETQEARFIQQYGNELAKLEPIFRCCRANPEQFEQLKEDYAYAQQTQRDARQQAFALAEVVQRRAHFSYSDSAEMLSGNSDLNEKLRQRLEQAESERSRARDAMRAHAAQLSQYNQVLASLKSSYDTKKELLNDLYKELQDIGVRADAGKKRARARRHELHMQLSNNRSRRNQLEKALTFCEAEMDNLTRKLRKLERDYCEMREQVVTAKAGWCAVMRLVKDNGVERRLHRRELAYLSADELRSMSDKALGALRLAVADNEHLRDVLRISEDPKRPERKIQFFVAVYQHLRERIRQDIIRTDDPVEAIEQMEIELSRLTEELTNREQKLAISSRSVANIIRKTIQREQNRIRMLNQGLQSVSFGQVNSVRLNVNVRETHSMLLDVLSEQHEQHQDLFNSNRLTFSEALAKLYQRLNPQIDMGQRTPQTIGEELLDYRNYLEMEVEVNRGSDGWLRAESGALSTGEAIGTGMSILVMVVQSWEDESRRLRGKDISPCRLLFLDEAARLDARSIATLFELCERLEMQLIIAAPENISPEKGTTYKLVRKVFNNHEHVHVVGLRGFDAPLPEALPGTADAS.

34-41 (GGNGAGKS) contacts ATP. 2 coiled-coil regions span residues 138 to 163 (ETLNDRQARVVSLNELKDKLEAMEGV) and 331 to 664 (QAAS…RLSQ). Residues 665–782 (PGGSEDPRLN…ALPLFGRAAR (118 aa)) form a flexible hinge region. 2 coiled-coil regions span residues 831 to 1112 (DDPE…TAKA) and 1206 to 1257 (VEAI…MLNQ).

The protein belongs to the SMC family. MukB subfamily. As to quaternary structure, homodimerization via its hinge domain. Binds to DNA via its C-terminal region. Interacts, and probably forms a ternary complex, with MukE and MukF via its C-terminal region. The complex formation is stimulated by calcium or magnesium. Interacts with tubulin-related protein FtsZ.

The protein localises to the cytoplasm. Its subcellular location is the nucleoid. Functionally, plays a central role in chromosome condensation, segregation and cell cycle progression. Functions as a homodimer, which is essential for chromosome partition. Involved in negative DNA supercoiling in vivo, and by this means organize and compact chromosomes. May achieve or facilitate chromosome segregation by condensation DNA from both sides of a centrally located replisome during cell division. This chain is Chromosome partition protein MukB, found in Klebsiella pneumoniae.